Consider the following 302-residue polypeptide: MDQQRLTHLKQLEAESIHIIREVAAEFDNPVMMYSIGKDSSVMLHLARKAFYPGKIPFPLLHVDTDWKFREMIEFRDRTAEKYGFELLVHKNPEGIAMGCSPFVHGSSKHTDIMKTQGLKQALNKYGFDAAFGGARRDEEKSRAKERVYSFRDKNHTWDPKNQRPELWKTYNGQVNKGESIRVFPLSNWTELDIWQYIYLENIEIVPLYLADKRPVVERDGMLIMVDDDRMELQPGEVIEEKSVRFRTLGCYPLTGAIESEANTLTGIIEEMLVATSSERQGRAIDHDQSGSMELKKRQGYF.

A disordered region spans residues 280–302 (RQGRAIDHDQSGSMELKKRQGYF).

The protein belongs to the PAPS reductase family. CysD subfamily. Heterodimer composed of CysD, the smaller subunit, and CysN.

It catalyses the reaction sulfate + ATP + H(+) = adenosine 5'-phosphosulfate + diphosphate. It participates in sulfur metabolism; hydrogen sulfide biosynthesis; sulfite from sulfate: step 1/3. With CysN forms the ATP sulfurylase (ATPS) that catalyzes the adenylation of sulfate producing adenosine 5'-phosphosulfate (APS) and diphosphate, the first enzymatic step in sulfur assimilation pathway. APS synthesis involves the formation of a high-energy phosphoric-sulfuric acid anhydride bond driven by GTP hydrolysis by CysN coupled to ATP hydrolysis by CysD. This Vibrio parahaemolyticus serotype O3:K6 (strain RIMD 2210633) protein is Sulfate adenylyltransferase subunit 2.